Here is a 176-residue protein sequence, read N- to C-terminus: Late lactation protein (176 aa).

A signal peptide spans 1–18 (MKVLFFTIALSLFSILHA). A disulfide bridge connects residues Cys78 and Cys171.

This sequence belongs to the calycin superfamily. Lipocalin family. Mammary gland. Secreted in milk.

It is found in the secreted. In terms of biological role, probably serves a role in the transport of a small ligand released during the hydrolysis of milk fat. The protein is Late lactation protein of Trichosurus vulpecula (Brush-tailed possum).